A 180-amino-acid polypeptide reads, in one-letter code: Large ribosomal subunit protein uL6c (180 aa).

It belongs to the universal ribosomal protein uL6 family. As to quaternary structure, part of the 50S ribosomal subunit.

Its subcellular location is the plastid. It localises to the chloroplast. Its function is as follows. Binds 23S rRNA. The sequence is that of Large ribosomal subunit protein uL6c (rpl6) from Porphyra purpurea (Red seaweed).